A 126-amino-acid chain; its full sequence is Large ribosomal subunit protein eL8 (126 aa).

This sequence belongs to the eukaryotic ribosomal protein eL8 family. In terms of assembly, part of the 50S ribosomal subunit. Probably part of the RNase P complex.

The protein resides in the cytoplasm. In terms of biological role, multifunctional RNA-binding protein that recognizes the K-turn motif in ribosomal RNA, the RNA component of RNase P, box H/ACA, box C/D and box C'/D' sRNAs. The sequence is that of Large ribosomal subunit protein eL8 from Sulfolobus acidocaldarius (strain ATCC 33909 / DSM 639 / JCM 8929 / NBRC 15157 / NCIMB 11770).